A 244-amino-acid chain; its full sequence is 2-C-methyl-D-erythritol 4-phosphate cytidylyltransferase (244 aa).

This sequence belongs to the IspD/TarI cytidylyltransferase family. IspD subfamily.

It carries out the reaction 2-C-methyl-D-erythritol 4-phosphate + CTP + H(+) = 4-CDP-2-C-methyl-D-erythritol + diphosphate. Its pathway is isoprenoid biosynthesis; isopentenyl diphosphate biosynthesis via DXP pathway; isopentenyl diphosphate from 1-deoxy-D-xylulose 5-phosphate: step 2/6. Functionally, catalyzes the formation of 4-diphosphocytidyl-2-C-methyl-D-erythritol from CTP and 2-C-methyl-D-erythritol 4-phosphate (MEP). The polypeptide is 2-C-methyl-D-erythritol 4-phosphate cytidylyltransferase (Corynebacterium diphtheriae (strain ATCC 700971 / NCTC 13129 / Biotype gravis)).